The primary structure comprises 716 residues: DNA ligase (716 aa).

NAD(+) contacts are provided by residues 50 to 54 (DAEYD), 99 to 100 (SL), and glutamate 132. The active-site N6-AMP-lysine intermediate is lysine 134. NAD(+) contacts are provided by arginine 155, glutamate 192, lysine 308, and lysine 332. Residues cysteine 437, cysteine 439, cysteine 461, and cysteine 467 each contribute to the Zn(2+) site. The region spanning 638–716 (KSNSAVAGKT…EDEWLKLIGE (79 aa)) is the BRCT domain.

The protein belongs to the NAD-dependent DNA ligase family. LigA subfamily. Mg(2+) serves as cofactor. The cofactor is Mn(2+).

The enzyme catalyses NAD(+) + (deoxyribonucleotide)n-3'-hydroxyl + 5'-phospho-(deoxyribonucleotide)m = (deoxyribonucleotide)n+m + AMP + beta-nicotinamide D-nucleotide.. Functionally, DNA ligase that catalyzes the formation of phosphodiester linkages between 5'-phosphoryl and 3'-hydroxyl groups in double-stranded DNA using NAD as a coenzyme and as the energy source for the reaction. It is essential for DNA replication and repair of damaged DNA. The polypeptide is DNA ligase (Bradyrhizobium diazoefficiens (strain JCM 10833 / BCRC 13528 / IAM 13628 / NBRC 14792 / USDA 110)).